The sequence spans 252 residues: Proteasome subunit alpha type-3 (252 aa).

The protein belongs to the peptidase T1A family. In terms of assembly, the 26S proteasome consists of a 20S proteasome core and two 19S regulatory subunits. The 20S proteasome core is composed of 28 subunits that are arranged in four stacked rings, resulting in a barrel-shaped structure. The two end rings are each formed by seven alpha subunits, and the two central rings are each formed by seven beta subunits. The catalytic chamber with the active sites is on the inside of the barrel.

The protein resides in the cytoplasm. It is found in the nucleus. The proteasome is a multicatalytic proteinase complex which is characterized by its ability to cleave peptides with Arg, Phe, Tyr, Leu, and Glu adjacent to the leaving group at neutral or slightly basic pH. The proteasome has an ATP-dependent proteolytic activity. This chain is Proteasome subunit alpha type-3, found in Acanthamoeba castellanii (Amoeba).